Reading from the N-terminus, the 360-residue chain is Phospho-N-acetylmuramoyl-pentapeptide-transferase (360 aa).

10 consecutive transmembrane segments (helical) span residues 21–41 (YLTFRAIMSILTGLGFALWIG), 71–91 (TPTMGGIMILLSIFLSVILWA), 94–114 (SNPYVWVVLFVLVSFGTIGFI), 142–162 (LVVAFFLYATATTDAQTVLVV), 168–188 (IMPQLGLLFILMTYFVIVGAS), 199–219 (GLAIMPTVMVAAGFALIAWAT), 236–256 (ASELMVICTAIIGAGLGFLWF), 263–283 (VFMGDVGSLALGAILGIIAVL), 288–308 (FLLFIMGGVFVMETMSVILQV), and 338–358 (VIVRFWIITLVLVLLGLVTLK).

The protein belongs to the glycosyltransferase 4 family. MraY subfamily. Mg(2+) is required as a cofactor.

It is found in the cell inner membrane. It catalyses the reaction UDP-N-acetyl-alpha-D-muramoyl-L-alanyl-gamma-D-glutamyl-meso-2,6-diaminopimeloyl-D-alanyl-D-alanine + di-trans,octa-cis-undecaprenyl phosphate = di-trans,octa-cis-undecaprenyl diphospho-N-acetyl-alpha-D-muramoyl-L-alanyl-D-glutamyl-meso-2,6-diaminopimeloyl-D-alanyl-D-alanine + UMP. The protein operates within cell wall biogenesis; peptidoglycan biosynthesis. Its function is as follows. Catalyzes the initial step of the lipid cycle reactions in the biosynthesis of the cell wall peptidoglycan: transfers peptidoglycan precursor phospho-MurNAc-pentapeptide from UDP-MurNAc-pentapeptide onto the lipid carrier undecaprenyl phosphate, yielding undecaprenyl-pyrophosphoryl-MurNAc-pentapeptide, known as lipid I. In Tolumonas auensis (strain DSM 9187 / NBRC 110442 / TA 4), this protein is Phospho-N-acetylmuramoyl-pentapeptide-transferase.